The following is a 654-amino-acid chain: MKVIVFAYHEIGYIGLSCLIKLGFKVLSVITHIDDHASEKIFFSSVKKKSLKHKIPVFYPKNINNLKWIDYLSKLKPDIIFSFYYRKILSEDILKIPKLGSFNLHGSLLPKYRGCSPLNWVLINGEKTTGVTLHRMTKKIDHGSILSQYSIKIEEKDTSKSLYKKLCYASMYILNKTLPMILKNKINEIDCTDDFSSYFHKRYPKDGLIDWNQSANNIYNLIRALTKPWPGAFSYLFDKKIIIWKSKISFESYKTPGTILNFNPLIISCKKKSLEILSAQYTECNILNKRNIENISRIKGKKLIIKNIKSFKNLKKILILGVNGFIGYHITNLLLKYNNYKIYGIDIKNNLVKSFIGNEKFCFIKGDIKQYYNWVKKKIKKCDIILPLIAIARPMQYIKNPLKVFKIDFEENLKIIRYCVKYKKRIIFPSTSEVYGMCKDDYFDEENSNLVTGAIKNQRWIYSSSKQLLDRIIWAYGVKNNLNFTIFRPFNWIGPGLDDFKIAEKQNARVTTQIIFNLINGLPVTIVNNGNQKRCFTDIDDGIEALFEIIKNKNNKCNKKIINIGNPHNEYTIMQLTKIIINIIYSNNRNYNFPKFSGFNMLSGTNYYGEGYQDIDRRKPNIDIAKKLLNWTPKTKIRITLRKIINFFINNNTS.

Residues 1 to 303 (MKVIVFAYHE…NISRIKGKKL (303 aa)) form a formyltransferase ArnAFT region. The active-site Proton donor; for formyltransferase activity is the His-105. A (6R)-10-formyltetrahydrofolate-binding site is contributed by 137–141 (TKKID). The interval 313-654 (NLKKILILGV…INFFINNNTS (342 aa)) is dehydrogenase ArnADH. Residues Asp-346 and 367–368 (DI) each bind NAD(+). Residues Ala-392, Tyr-397, and 431-432 (TS) each bind UDP-alpha-D-glucuronate. Residue Glu-433 is the Proton acceptor; for decarboxylase activity of the active site. UDP-alpha-D-glucuronate-binding positions include Arg-459, Asn-491, 532-534 (QKR), and Tyr-612. The Proton donor; for decarboxylase activity role is filled by Arg-618.

The protein in the N-terminal section; belongs to the Fmt family. UDP-L-Ara4N formyltransferase subfamily. It in the C-terminal section; belongs to the NAD(P)-dependent epimerase/dehydratase family. UDP-glucuronic acid decarboxylase subfamily. As to quaternary structure, homohexamer, formed by a dimer of trimers.

It carries out the reaction UDP-alpha-D-glucuronate + NAD(+) = UDP-beta-L-threo-pentopyranos-4-ulose + CO2 + NADH. It catalyses the reaction UDP-4-amino-4-deoxy-beta-L-arabinose + (6R)-10-formyltetrahydrofolate = UDP-4-deoxy-4-formamido-beta-L-arabinose + (6S)-5,6,7,8-tetrahydrofolate + H(+). The protein operates within nucleotide-sugar biosynthesis; UDP-4-deoxy-4-formamido-beta-L-arabinose biosynthesis; UDP-4-deoxy-4-formamido-beta-L-arabinose from UDP-alpha-D-glucuronate: step 1/3. Its pathway is nucleotide-sugar biosynthesis; UDP-4-deoxy-4-formamido-beta-L-arabinose biosynthesis; UDP-4-deoxy-4-formamido-beta-L-arabinose from UDP-alpha-D-glucuronate: step 3/3. It participates in bacterial outer membrane biogenesis; lipopolysaccharide biosynthesis. Functionally, bifunctional enzyme that catalyzes the oxidative decarboxylation of UDP-glucuronic acid (UDP-GlcUA) to UDP-4-keto-arabinose (UDP-Ara4O) and the addition of a formyl group to UDP-4-amino-4-deoxy-L-arabinose (UDP-L-Ara4N) to form UDP-L-4-formamido-arabinose (UDP-L-Ara4FN). The modified arabinose is attached to lipid A and is required for resistance to polymyxin and cationic antimicrobial peptides. This is Bifunctional polymyxin resistance protein ArnA from Wigglesworthia glossinidia brevipalpis.